Reading from the N-terminus, the 139-residue chain is Small ribosomal subunit protein uS12 (139 aa).

The tract at residues 1–44 (MPTINQLVRKPRQSKITKSKSPALNKGYNSFKKSLTDVKSPQKR) is disordered. A compositionally biased stretch (basic residues) spans 9 to 18 (RKPRQSKITK). Residues 19–39 (SKSPALNKGYNSFKKSLTDVK) are compositionally biased toward polar residues. Asp102 carries the post-translational modification 3-methylthioaspartic acid.

It belongs to the universal ribosomal protein uS12 family. As to quaternary structure, part of the 30S ribosomal subunit. Contacts proteins S8 and S17. May interact with IF1 in the 30S initiation complex.

With S4 and S5 plays an important role in translational accuracy. Functionally, interacts with and stabilizes bases of the 16S rRNA that are involved in tRNA selection in the A site and with the mRNA backbone. Located at the interface of the 30S and 50S subunits, it traverses the body of the 30S subunit contacting proteins on the other side and probably holding the rRNA structure together. The combined cluster of proteins S8, S12 and S17 appears to hold together the shoulder and platform of the 30S subunit. In Lysinibacillus sphaericus (strain C3-41), this protein is Small ribosomal subunit protein uS12.